Here is a 627-residue protein sequence, read N- to C-terminus: MLLFLWIETSNEYFNFDWVIFLGTGYWFYWSIFILSLAGILTAYSSLLLLLGLLLLWEGIELYLHLCHKILILLVILPCVILMFIICKFWKERWLVAGLSLQIFAPYVHLVSITVMVILFWPVAIYVARLEREVRMRRYRMTHSEKKRLKKCNVIARLRGLQVAVGLPFLLIFLSLCLMPLGIYSPCIQEKENLGPKPTLFGHRGAPMLGPENTMMSFEKAVEHGAHGLETDVHLSYDRVPFLMHDFDLRRTTNIREVQPESAFKNPATFSWDFLSTLNAGKWFVKPELKPFYNMKPLSKADKERARNQSIPTLADLLTLAKKERKFVIFDLRGPPPRHPLRHTFVRQVVSVILASKIEQHLIFWLPAHDRRYVRSMAPGFQHVGHLVSVKTLAKNNISIINVDYKKLFPNGLRDYKAANIRINVYTINEPWLFSLAWCSRINSVTTDNIGLLSQLNHPHFFMTPKFYMFIWLLVDIISVLFIVAIFCFHWRRETIKEKLFETSSTLTDTQSRSENEEDLHIAMKPARVVESPWTLAALYPALSKSGKEHQGRFNFAAPSKKLVPIKNAVTPLKPGKHDIQPPMPTTVFELTQAPSRQAKSKATFQTTLPTLKVDKPTMPSVEVPYP.

The Cytoplasmic portion of the chain corresponds to 1-17 (MLLFLWIETSNEYFNFD). The chain crosses the membrane as a helical span at residues 18-38 (WVIFLGTGYWFYWSIFILSLA). Residue Gly39 is a topological domain, extracellular. The helical transmembrane segment at 40-60 (ILTAYSSLLLLLGLLLLWEGI) threads the bilayer. At 61 to 69 (ELYLHLCHK) the chain is on the cytoplasmic side. Residues 70–90 (ILILLVILPCVILMFIICKFW) traverse the membrane as a helical segment. Residues 91-107 (KERWLVAGLSLQIFAPY) are Extracellular-facing. A helical membrane pass occupies residues 108 to 128 (VHLVSITVMVILFWPVAIYVA). Topologically, residues 129-162 (RLEREVRMRRYRMTHSEKKRLKKCNVIARLRGLQ) are cytoplasmic. A helical membrane pass occupies residues 163–183 (VAVGLPFLLIFLSLCLMPLGI). Topologically, residues 184-468 (YSPCIQEKEN…PHFFMTPKFY (285 aa)) are extracellular. In terms of domain architecture, GP-PDE spans 198–457 (PTLFGHRGAP…DNIGLLSQLN (260 aa)). Positions 230, 232, and 245 each coordinate a divalent metal cation. Residues Asn308 and Asn397 are each glycosylated (N-linked (GlcNAc...) asparagine). A helical membrane pass occupies residues 469 to 489 (MFIWLLVDIISVLFIVAIFCF). The Cytoplasmic segment spans residues 490–627 (HWRRETIKEK…TMPSVEVPYP (138 aa)).

The protein belongs to the glycerophosphoryl diester phosphodiesterase family.

The protein resides in the membrane. In Macaca fascicularis (Crab-eating macaque), this protein is Glycerophosphodiester phosphodiesterase domain-containing protein 4 (GDPD4).